The sequence spans 372 residues: Alpha-parvin (372 aa).

The span at 1–11 (MATSPQKSPSV) shows a compositional bias: low complexity. A disordered region spans residues 1–45 (MATSPQKSPSVPKSPTPKSPPSRKKDDSFLGKLGGTLARRKKAKE). At alanine 2 the chain carries N-acetylalanine. 3 positions are modified to phosphoserine: serine 8, serine 14, and serine 19. Residues 21–25 (PSRKK) form an interaction with ARHGAP31 region. Residues serine 28 and serine 62 each carry the phosphoserine modification. Calponin-homology (CH) domains are found at residues 95 to 202 (QELM…QYFR) and 262 to 369 (NVVK…TKYR). The segment at 223 to 372 (GILQSRQIQE…NLFTKYRNVE (150 aa)) is required for interaction with TESK1 and ILK.

This sequence belongs to the parvin family. Component of the heterotrimeric IPP (ILK-PINCH-PARVIN) complex composed of ILK, LIMS1/PINCH and PARVA; the complex binds to F-actin via the C-terminal tail of LIMS1 and the N-terminal region of PARVA, promoting F-actin filament bundling. Formation of the IPP complex is dependent on protein kinase C and precedes integrin-mediated cell adhesion and spreading. Interacts with TGFB1I1. Interacts with ARHGAP31. Interacts with the actin cytoskeleton. Interacts (via C-terminus) with TESK1 (via C-terminus); the interaction inhibits TESK1 kinase activity. Interacts with PXN/PAXILLIN (via LD motif 4). Widely expressed, with highest levels in heart, skeletal muscle, kidney and liver.

The protein localises to the cell junction. It localises to the focal adhesion. It is found in the cell membrane. Its subcellular location is the cytoplasm. The protein resides in the cytoskeleton. The protein localises to the myofibril. It localises to the sarcomere. It is found in the z line. In terms of biological role, plays a role in sarcomere organization and in smooth muscle cell contraction. Required for normal development of the embryonic cardiovascular system, and for normal septation of the heart outflow tract. Plays a role in sprouting angiogenesis and is required for normal adhesion of vascular smooth muscle cells to endothelial cells during blood vessel development. Plays a role in the reorganization of the actin cytoskeleton, formation of lamellipodia and ciliogenesis. Plays a role in the establishment of cell polarity, cell adhesion, cell spreading, and directed cell migration. Within the IPP (ILK-PINCH-PARVIN) complex, binds to F-actin, promoting F-actin bundling, a process required to generate force for actin cytoskeleton reorganization and subsequent dynamic cell adhesion events such as cell spreading and migration. In Homo sapiens (Human), this protein is Alpha-parvin (PARVA).